Here is a 200-residue protein sequence, read N- to C-terminus: dTTP/UTP pyrophosphatase (200 aa).

The Proton acceptor role is filled by Asp73.

The protein belongs to the Maf family. YhdE subfamily. It depends on a divalent metal cation as a cofactor.

It localises to the cytoplasm. It catalyses the reaction dTTP + H2O = dTMP + diphosphate + H(+). It carries out the reaction UTP + H2O = UMP + diphosphate + H(+). Its function is as follows. Nucleoside triphosphate pyrophosphatase that hydrolyzes dTTP and UTP. May have a dual role in cell division arrest and in preventing the incorporation of modified nucleotides into cellular nucleic acids. The sequence is that of dTTP/UTP pyrophosphatase from Chromohalobacter salexigens (strain ATCC BAA-138 / DSM 3043 / CIP 106854 / NCIMB 13768 / 1H11).